We begin with the raw amino-acid sequence, 186 residues long: Pyridoxal 5'-phosphate synthase subunit PdxT (186 aa).

47–49 (GES) provides a ligand contact to L-glutamine. Cysteine 76 functions as the Nucleophile in the catalytic mechanism. Residues arginine 102 and 130–131 (IR) contribute to the L-glutamine site. Active-site charge relay system residues include histidine 166 and glutamate 168.

It belongs to the glutaminase PdxT/SNO family. In terms of assembly, in the presence of PdxS, forms a dodecamer of heterodimers. Only shows activity in the heterodimer.

It carries out the reaction aldehydo-D-ribose 5-phosphate + D-glyceraldehyde 3-phosphate + L-glutamine = pyridoxal 5'-phosphate + L-glutamate + phosphate + 3 H2O + H(+). The catalysed reaction is L-glutamine + H2O = L-glutamate + NH4(+). Its pathway is cofactor biosynthesis; pyridoxal 5'-phosphate biosynthesis. Catalyzes the hydrolysis of glutamine to glutamate and ammonia as part of the biosynthesis of pyridoxal 5'-phosphate. The resulting ammonia molecule is channeled to the active site of PdxS. The chain is Pyridoxal 5'-phosphate synthase subunit PdxT from Staphylococcus epidermidis (strain ATCC 35984 / DSM 28319 / BCRC 17069 / CCUG 31568 / BM 3577 / RP62A).